The chain runs to 217 residues: Uracil phosphoribosyltransferase (217 aa).

5-phospho-alpha-D-ribose 1-diphosphate-binding positions include R84, R109, and 137-145 (DPMLATGGS). Uracil-binding positions include I202 and 207–209 (GDA). Residue D208 coordinates 5-phospho-alpha-D-ribose 1-diphosphate.

It belongs to the UPRTase family. The cofactor is Mg(2+).

It catalyses the reaction UMP + diphosphate = 5-phospho-alpha-D-ribose 1-diphosphate + uracil. It functions in the pathway pyrimidine metabolism; UMP biosynthesis via salvage pathway; UMP from uracil: step 1/1. With respect to regulation, allosterically activated by GTP. Its function is as follows. Catalyzes the conversion of uracil and 5-phospho-alpha-D-ribose 1-diphosphate (PRPP) to UMP and diphosphate. The polypeptide is Uracil phosphoribosyltransferase (Synechococcus elongatus (strain ATCC 33912 / PCC 7942 / FACHB-805) (Anacystis nidulans R2)).